The following is an 819-amino-acid chain: Probable cadmium/zinc-transporting ATPase HMA1, chloroplastic (819 aa).

The N-terminal 17 residues, 1–17 (MEPATLTRSSSLTRFPY), are a transit peptide targeting the chloroplast. Over 18 to 122 (RRGLSTLRLA…IGWVRLANYL (105 aa)) the chain is Stromal. Residues 66-79 (DHHHDHHHDDEQDH) show a composition bias toward basic and acidic residues. The segment at 66-87 (DHHHDHHHDDEQDHHNHHHHHH) is disordered. A helical membrane pass occupies residues 123-144 (REHLHLCCSAAAMFLAAAVCPY). The Lumenal segment spans residues 145–153 (LAPEPYIKS). The helical transmembrane segment at 154 to 173 (LQNAFMIVGFPLVGVSASLD) threads the bilayer. The Stromal portion of the chain corresponds to 174 to 180 (ALMDIAG). The chain crosses the membrane as a helical span at residues 181–201 (GKVNIHVLMALAAFASVFMGN). A topological domain (lumenal) is located at residue A202. Residues 203 to 223 (LEGGLLLAMFNLAHIAEEFFT) traverse the membrane as a helical segment. At 224-361 (SRSMVDVKEL…KPKLQRWLDE (138 aa)) the chain is on the stromal side. A helical membrane pass occupies residues 362 to 384 (FGENYSKVVVVLSLAIAFLGPFL). Topologically, residues 385–398 (FKWPFLSTAACRGS) are lumenal. The helical transmembrane segment at 399-416 (VYRALGLMVAASPCALAV) threads the bilayer. The Stromal portion of the chain corresponds to 417–737 (APLAYATAIS…AKSRQTTSLV (321 aa)). D453 (4-aspartylphosphate intermediate) is an active-site residue. 2 residues coordinate Mg(2+): E682 and D686. Residues 738–757 (KQNVALALTSIFLAALPSVL) form a helical membrane-spanning segment. Topologically, residues 758–762 (GFVPL) are lumenal. A helical transmembrane segment spans residues 763–781 (WLTVLLHEGGTLLVCLNSV). Topologically, residues 782–819 (RGLNDPSWSWKQDIVHLINKLRSQEPTSSSSNSLSSAH) are stromal.

It belongs to the cation transport ATPase (P-type) (TC 3.A.3) family. Type IB subfamily.

It localises to the plastid. It is found in the chloroplast inner membrane. It carries out the reaction Zn(2+)(in) + ATP + H2O = Zn(2+)(out) + ADP + phosphate + H(+). The catalysed reaction is Cd(2+)(in) + ATP + H2O = Cd(2+)(out) + ADP + phosphate + H(+). Its function is as follows. Involved in cadmium/zinc transport. This Arabidopsis thaliana (Mouse-ear cress) protein is Probable cadmium/zinc-transporting ATPase HMA1, chloroplastic (HMA1).